The following is a 197-amino-acid chain: Shikimate kinase (197 aa).

26 to 31 (GSGKSR) contributes to the ATP binding site. Position 30 (S30) interacts with Mg(2+). D48, R72, and G94 together coordinate substrate. Residue R132 coordinates ATP. A substrate-binding site is contributed by R150.

It belongs to the shikimate kinase family. In terms of assembly, monomer. It depends on Mg(2+) as a cofactor.

Its subcellular location is the cytoplasm. The enzyme catalyses shikimate + ATP = 3-phosphoshikimate + ADP + H(+). Its pathway is metabolic intermediate biosynthesis; chorismate biosynthesis; chorismate from D-erythrose 4-phosphate and phosphoenolpyruvate: step 5/7. Its function is as follows. Catalyzes the specific phosphorylation of the 3-hydroxyl group of shikimic acid using ATP as a cosubstrate. The chain is Shikimate kinase from Prochlorococcus marinus (strain MIT 9211).